Here is a 578-residue protein sequence, read N- to C-terminus: NADH-quinone oxidoreductase subunit C/D (578 aa).

The tract at residues 1–167 is NADH dehydrogenase I subunit C; that stretch reads MILSLFKLFG…DEFYFTKQKE (167 aa). The tract at residues 192 to 578 is NADH dehydrogenase I subunit D; it reads EYMFLNFGPN…IDFVMSDVDR (387 aa).

This sequence in the N-terminal section; belongs to the complex I 30 kDa subunit family. It in the C-terminal section; belongs to the complex I 49 kDa subunit family. As to quaternary structure, NDH-1 is composed of 13 different subunits. Subunits NuoB, CD, E, F, and G constitute the peripheral sector of the complex.

The protein resides in the cell inner membrane. It carries out the reaction a quinone + NADH + 5 H(+)(in) = a quinol + NAD(+) + 4 H(+)(out). In terms of biological role, NDH-1 shuttles electrons from NADH, via FMN and iron-sulfur (Fe-S) centers, to quinones in the respiratory chain. The immediate electron acceptor for the enzyme in this species is believed to be ubiquinone. Couples the redox reaction to proton translocation (for every two electrons transferred, four hydrogen ions are translocated across the cytoplasmic membrane), and thus conserves the redox energy in a proton gradient. The chain is NADH-quinone oxidoreductase subunit C/D from Buchnera aphidicola subsp. Cinara cedri (strain Cc).